Consider the following 385-residue polypeptide: Suppressor protein STP22 of temperature-sensitive alpha-factor receptor and arginine permease (385 aa).

Residues 12–161 (AVVNWLFKVI…LHEPPQDQAP (150 aa)) enclose the UEV domain. Residues 155-219 (PPQDQAPSLP…DMDNTDISPT (65 aa)) form a disordered region. A compositionally biased stretch (polar residues) spans 168 to 177 (NTQLQQEQNT). The span at 178 to 201 (PPLPPKPKSPHLKPPLPPPPPPQP) shows a compositional bias: pro residues. Positions 272 to 300 (LRAVEQAIEQTMHSLNAQIDVLTANRAKV) form a coiled coil. Residues 322–385 (TDGLNQLYNL…HIQRITSPLS (64 aa)) form the SB domain.

This sequence belongs to the ubiquitin-conjugating enzyme family. UEV subfamily. As to quaternary structure, component of the ESCRT-I complex (endosomal sorting complex required for transport I) which consists of STP22, VPS28, SRN2 and MVB12 in a 1:1:1:1 stoichiometry. Interacts with HSE1 and VPS27. Interacts with MVB12 and SRN2.

Its subcellular location is the cytoplasm. It localises to the endosome. The protein resides in the late endosome membrane. In terms of biological role, component of the ESCRT-I complex, a regulator of vesicular trafficking process. Binds to ubiquitinated cargo proteins and is required for the sorting of endocytic ubiquitinated cargos into multivesicular bodies (MVBs). Mediates the association to the ESCRT-0 complex. Required for vacuolar targeting of temperature-sensitive plasma membrane proteins STE2 and CAN1. This is Suppressor protein STP22 of temperature-sensitive alpha-factor receptor and arginine permease (STP22) from Saccharomyces cerevisiae (strain ATCC 204508 / S288c) (Baker's yeast).